Reading from the N-terminus, the 37-residue chain is Large ribosomal subunit protein bL36c (37 aa).

In terms of assembly, component of the chloroplast large ribosomal subunit (LSU). Mature 70S chloroplast ribosomes of higher plants consist of a small (30S) and a large (50S) subunit. The 30S small subunit contains 1 molecule of ribosomal RNA (16S rRNA) and 24 different proteins. The 50S large subunit contains 3 rRNA molecules (23S, 5S and 4.5S rRNA) and 33 different proteins.

It is found in the plastid. Its subcellular location is the chloroplast. Functionally, component of the chloroplast ribosome (chloro-ribosome), a dedicated translation machinery responsible for the synthesis of chloroplast genome-encoded proteins, including proteins of the transcription and translation machinery and components of the photosynthetic apparatus. The sequence is that of Large ribosomal subunit protein bL36c (rpl36) from Spinacia oleracea (Spinach).